We begin with the raw amino-acid sequence, 377 residues long: Glutamate 5-kinase (377 aa).

Lys-22 contacts ATP. Ser-62, Asp-149, and Asn-161 together coordinate substrate. Residues 181–182 (TD) and 223–229 (TGGMVTK) contribute to the ATP site. One can recognise a PUA domain in the interval 285-363 (RGAIVVDAGA…AQLKRFLGPQ (79 aa)).

Belongs to the glutamate 5-kinase family.

It is found in the cytoplasm. It carries out the reaction L-glutamate + ATP = L-glutamyl 5-phosphate + ADP. Its pathway is amino-acid biosynthesis; L-proline biosynthesis; L-glutamate 5-semialdehyde from L-glutamate: step 1/2. Its function is as follows. Catalyzes the transfer of a phosphate group to glutamate to form L-glutamate 5-phosphate. This chain is Glutamate 5-kinase, found in Bifidobacterium longum subsp. infantis (strain ATCC 15697 / DSM 20088 / JCM 1222 / NCTC 11817 / S12).